A 993-amino-acid polypeptide reads, in one-letter code: UPF0182 protein MAP_3291c (993 aa).

Helical transmembrane passes span Ile18–Asp38, Phe63–Val83, Leu113–Tyr133, Phe175–Ile195, Ile210–Asp230, Ala254–Phe274, and Ile287–Val307. The disordered stretch occupies residues Asn903–Gly941. Positions Ser929–Pro939 are enriched in pro residues.

Belongs to the UPF0182 family.

The protein resides in the cell membrane. The chain is UPF0182 protein MAP_3291c from Mycolicibacterium paratuberculosis (strain ATCC BAA-968 / K-10) (Mycobacterium paratuberculosis).